We begin with the raw amino-acid sequence, 154 residues long: Large ribosomal subunit protein uL23y (154 aa).

This sequence belongs to the universal ribosomal protein uL23 family.

Its function is as follows. Binds to a specific region on the 26S rRNA. The protein is Large ribosomal subunit protein uL23y (RPL23AB) of Arabidopsis thaliana (Mouse-ear cress).